Reading from the N-terminus, the 223-residue chain is Ribonuclease T (223 aa).

Residues 20–194 enclose the Exonuclease domain; it reads VVIDVETAGF…YDTNQTALLF (175 aa). Positions 23, 25, 181, and 186 each coordinate Mg(2+). His-181 (proton donor/acceptor) is an active-site residue.

This sequence belongs to the RNase T family. In terms of assembly, homodimer. Mg(2+) is required as a cofactor.

Trims short 3' overhangs of a variety of RNA species, leaving a one or two nucleotide 3' overhang. Responsible for the end-turnover of tRNA: specifically removes the terminal AMP residue from uncharged tRNA (tRNA-C-C-A). Also appears to be involved in tRNA biosynthesis. This chain is Ribonuclease T, found in Pectobacterium atrosepticum (strain SCRI 1043 / ATCC BAA-672) (Erwinia carotovora subsp. atroseptica).